The following is a 181-amino-acid chain: Large ribosomal subunit protein uL5 (181 aa).

This sequence belongs to the universal ribosomal protein uL5 family. Part of the 50S ribosomal subunit; part of the 5S rRNA/L5/L18/L25 subcomplex. Contacts the 5S rRNA and the P site tRNA. Forms a bridge to the 30S subunit in the 70S ribosome.

This is one of the proteins that bind and probably mediate the attachment of the 5S RNA into the large ribosomal subunit, where it forms part of the central protuberance. In the 70S ribosome it contacts protein S13 of the 30S subunit (bridge B1b), connecting the 2 subunits; this bridge is implicated in subunit movement. Contacts the P site tRNA; the 5S rRNA and some of its associated proteins might help stabilize positioning of ribosome-bound tRNAs. The sequence is that of Large ribosomal subunit protein uL5 from Mesomycoplasma hyopneumoniae (strain 232) (Mycoplasma hyopneumoniae).